We begin with the raw amino-acid sequence, 361 residues long: MLYNLLLPHIHNSHIANLFHYITFRSGLAIIITLSLSFITGPILIKFLRSLQKNGQPIRSDGPESHQTKVGTPTMGGIMIILSSCLSTLLLADLTNKYTWITLFGFISFGIIGFMDDYAKVTKNNHYGVRGKSKLLLQGIISFIICVLLEYLDKSPSHLLNVPFFKNLSLDLGYFYIVFAIFVIVGSSNAVNLTDGLDGLATVPIAFTAGSFALISYLVGNLIYSNYLQLTYIPNTGELTVLCAGLVGSCLGFLWFNAQPAEVFMGDTGSLSLGGVLGIISVITKHEIVLAIVGGLFVIETASVILQVYYFKATKGKRIFKMAPLHHHFEKHGWAESKVVIRFWIISVIFALIGLSSLKLR.

10 helical membrane-spanning segments follow: residues L28 to L48, T74 to L94, T99 to A119, S133 to D153, L168 to S188, V203 to I223, T236 to F256, V263 to I283, I288 to V308, and K338 to L358.

Belongs to the glycosyltransferase 4 family. MraY subfamily. Mg(2+) serves as cofactor.

Its subcellular location is the cell inner membrane. It catalyses the reaction UDP-N-acetyl-alpha-D-muramoyl-L-alanyl-gamma-D-glutamyl-meso-2,6-diaminopimeloyl-D-alanyl-D-alanine + di-trans,octa-cis-undecaprenyl phosphate = di-trans,octa-cis-undecaprenyl diphospho-N-acetyl-alpha-D-muramoyl-L-alanyl-D-glutamyl-meso-2,6-diaminopimeloyl-D-alanyl-D-alanine + UMP. The protein operates within cell wall biogenesis; peptidoglycan biosynthesis. In terms of biological role, catalyzes the initial step of the lipid cycle reactions in the biosynthesis of the cell wall peptidoglycan: transfers peptidoglycan precursor phospho-MurNAc-pentapeptide from UDP-MurNAc-pentapeptide onto the lipid carrier undecaprenyl phosphate, yielding undecaprenyl-pyrophosphoryl-MurNAc-pentapeptide, known as lipid I. This chain is Phospho-N-acetylmuramoyl-pentapeptide-transferase, found in Rickettsia massiliae (strain Mtu5).